The following is a 119-amino-acid chain: Large ribosomal subunit protein bL20 (119 aa).

The protein belongs to the bacterial ribosomal protein bL20 family.

Binds directly to 23S ribosomal RNA and is necessary for the in vitro assembly process of the 50S ribosomal subunit. It is not involved in the protein synthesizing functions of that subunit. This is Large ribosomal subunit protein bL20 from Halalkalibacterium halodurans (strain ATCC BAA-125 / DSM 18197 / FERM 7344 / JCM 9153 / C-125) (Bacillus halodurans).